The sequence spans 616 residues: Dihydroxy-acid dehydratase (616 aa).

Mg(2+) is bound at residue aspartate 81. A [2Fe-2S] cluster-binding site is contributed by cysteine 122. 2 residues coordinate Mg(2+): aspartate 123 and lysine 124. N6-carboxylysine is present on lysine 124. Position 195 (cysteine 195) interacts with [2Fe-2S] cluster. A Mg(2+)-binding site is contributed by glutamate 491. The active-site Proton acceptor is serine 517.

It belongs to the IlvD/Edd family. As to quaternary structure, homodimer. [2Fe-2S] cluster serves as cofactor. Requires Mg(2+) as cofactor.

The enzyme catalyses (2R)-2,3-dihydroxy-3-methylbutanoate = 3-methyl-2-oxobutanoate + H2O. It carries out the reaction (2R,3R)-2,3-dihydroxy-3-methylpentanoate = (S)-3-methyl-2-oxopentanoate + H2O. It functions in the pathway amino-acid biosynthesis; L-isoleucine biosynthesis; L-isoleucine from 2-oxobutanoate: step 3/4. Its pathway is amino-acid biosynthesis; L-valine biosynthesis; L-valine from pyruvate: step 3/4. Functionally, functions in the biosynthesis of branched-chain amino acids. Catalyzes the dehydration of (2R,3R)-2,3-dihydroxy-3-methylpentanoate (2,3-dihydroxy-3-methylvalerate) into 2-oxo-3-methylpentanoate (2-oxo-3-methylvalerate) and of (2R)-2,3-dihydroxy-3-methylbutanoate (2,3-dihydroxyisovalerate) into 2-oxo-3-methylbutanoate (2-oxoisovalerate), the penultimate precursor to L-isoleucine and L-valine, respectively. This chain is Dihydroxy-acid dehydratase, found in Escherichia coli O127:H6 (strain E2348/69 / EPEC).